The chain runs to 206 residues: Large ribosomal subunit protein uL4 (206 aa).

The protein belongs to the universal ribosomal protein uL4 family. In terms of assembly, part of the 50S ribosomal subunit.

One of the primary rRNA binding proteins, this protein initially binds near the 5'-end of the 23S rRNA. It is important during the early stages of 50S assembly. It makes multiple contacts with different domains of the 23S rRNA in the assembled 50S subunit and ribosome. Its function is as follows. Forms part of the polypeptide exit tunnel. The chain is Large ribosomal subunit protein uL4 from Rhodopseudomonas palustris (strain BisA53).